Reading from the N-terminus, the 309-residue chain is Ribonuclease Z (309 aa).

7 residues coordinate Zn(2+): His-63, His-65, Asp-67, His-68, His-143, Asp-213, and His-271. The active-site Proton acceptor is Asp-67.

This sequence belongs to the RNase Z family. In terms of assembly, homodimer. It depends on Zn(2+) as a cofactor.

It catalyses the reaction Endonucleolytic cleavage of RNA, removing extra 3' nucleotides from tRNA precursor, generating 3' termini of tRNAs. A 3'-hydroxy group is left at the tRNA terminus and a 5'-phosphoryl group is left at the trailer molecule.. In terms of biological role, zinc phosphodiesterase, which displays some tRNA 3'-processing endonuclease activity. Probably involved in tRNA maturation, by removing a 3'-trailer from precursor tRNA. This is Ribonuclease Z from Phocaeicola vulgatus (strain ATCC 8482 / DSM 1447 / JCM 5826 / CCUG 4940 / NBRC 14291 / NCTC 11154) (Bacteroides vulgatus).